We begin with the raw amino-acid sequence, 33 residues long: Alpha-amanitin proprotein (33 aa).

The propeptide occupies 1 to 10 (MSDINATRLP). I11 is modified ((3R,4R)-4,5-dihydroxyisoleucine; in form alpha-amanitin). I11 is modified ((3R,4S)-4-hydroxyisoleucine; in form gamma-amanitin). The segment at residues 11 to 18 (IWGIGCNP) is a cross-link (cyclopeptide (Ile-Pro)). The segment at residues 12 to 16 (WGIGC) is a cross-link (2'-cysteinyl-6'-hydroxytryptophan sulfoxide (Trp-Cys)). The residue at position 18 (P18) is a 4-hydroxyproline. A propeptide spanning residues 19 to 33 (CVGDEVTALITRGEA) is cleaved from the precursor.

It belongs to the MSDIN fungal toxin family. Post-translationally, processed by the macrocyclase-peptidase enzyme POPB to yield a toxic cyclic decapeptide. POPB first removes 10 residues from the N-terminus. Conformational trapping of the remaining peptide forces the enzyme to release this intermediate rather than proceed to macrocyclization. The enzyme rebinds the remaining peptide in a different conformation and catalyzes macrocyclization of the N-terminal 8 residues.

Functionally, major toxin belonging to the bicyclic octapeptides amatoxins that acts by binding non-competitively to RNA polymerase II and greatly slowing the elongation of transcripts from target promoters. This Amanita pallidorosea protein is Alpha-amanitin proprotein.